We begin with the raw amino-acid sequence, 212 residues long: Ribosomal RNA small subunit methyltransferase G (212 aa).

S-adenosyl-L-methionine-binding positions include Gly80, Leu85, 131 to 132, and Arg146; that span reads AE.

It belongs to the methyltransferase superfamily. RNA methyltransferase RsmG family.

Its subcellular location is the cytoplasm. The enzyme catalyses guanosine(527) in 16S rRNA + S-adenosyl-L-methionine = N(7)-methylguanosine(527) in 16S rRNA + S-adenosyl-L-homocysteine. Its function is as follows. Specifically methylates the N7 position of guanine in position 527 of 16S rRNA. The chain is Ribosomal RNA small subunit methyltransferase G from Xylella fastidiosa (strain 9a5c).